Here is a 680-residue protein sequence, read N- to C-terminus: Lipase 1 (680 aa).

Positions 1–34 (MKSQNKYSIRKFSVGASSILIATLLFLSGGQAQA) are cleaved as a signal peptide. A propeptide spanning residues 35-290 (AEKQVNMGNS…AKAKDDQTNK (256 aa)) is cleaved from the precursor. Residues 82–259 (KNLHNDKTIS…PTKDNDKKNG (178 aa)) are disordered. Over residues 84–112 (LHNDKTISEENHRKTDDLNKDQLKDDKKS) the composition is skewed to basic and acidic residues. The segment covering 125–138 (KNNNANPSDVNQGL) has biased composition (polar residues). Residues 148–170 (SKVASQQQSKEADNSQDSNANNN) show a composition bias toward low complexity. Over residues 204-223 (QPQQNNQANDKITNYNFNNE) the composition is skewed to polar residues. The segment covering 224-234 (QEVKPQKDEKT) has biased composition (basic and acidic residues). A compositionally biased stretch (polar residues) spans 235 to 246 (LSVSDLKNNQKS). Residue S408 is the Nucleophile of the active site. The active-site Charge relay system is the D600. A Ca(2+)-binding site is contributed by D638. H639 functions as the Charge relay system in the catalytic mechanism. The Ca(2+) site is built by D641, D646, and D649.

It belongs to the AB hydrolase superfamily. Lipase family.

It localises to the secreted. It catalyses the reaction a triacylglycerol + H2O = a diacylglycerol + a fatty acid + H(+). In Staphylococcus aureus (strain MSSA476), this protein is Lipase 1 (lip1).